The following is a 600-amino-acid chain: Prostaglandin G/H synthase 1 (600 aa).

A signal peptide spans 1 to 24 (MSRQGISLRFPLLLLLLSPSPVLP). The region spanning 32 to 70 (PVNPCCYYPCQHQGICVRFGLDRYQCDCTRTGYYGPNCT) is the EGF-like domain. Disulfide bonds link cysteine 36/cysteine 47, cysteine 37/cysteine 159, cysteine 41/cysteine 57, and cysteine 59/cysteine 69. 3 N-linked (GlcNAc...) asparagine glycosylation sites follow: asparagine 68, asparagine 104, and asparagine 144. Residue histidine 207 is the Proton acceptor of the active site. Tyrosine 385 acts as the For cyclooxygenase activity in catalysis. Histidine 388 provides a ligand contact to heme b. N-linked (GlcNAc...) asparagine glycosylation occurs at asparagine 410. Cysteine 569 and cysteine 575 are joined by a disulfide.

This sequence belongs to the prostaglandin G/H synthase family. As to quaternary structure, homodimer. The cofactor is heme b.

Its subcellular location is the microsome membrane. It is found in the endoplasmic reticulum membrane. The enzyme catalyses (5Z,8Z,11Z,14Z)-eicosatetraenoate + AH2 + 2 O2 = prostaglandin H2 + A + H2O. It catalyses the reaction (5Z,8Z,11Z,14Z)-eicosatetraenoate + 2 O2 = prostaglandin G2. The catalysed reaction is prostaglandin G2 + AH2 = prostaglandin H2 + A + H2O. It carries out the reaction (9Z,12Z)-octadecadienoate + AH2 + O2 = (9R)-hydroxy-(10E,12Z)-octadecadienoate + A + H2O. The enzyme catalyses (9Z,12Z)-octadecadienoate + AH2 + O2 = (9S)-hydroxy-(10E,12Z)-octadecadienoate + A + H2O. It catalyses the reaction (9Z,12Z)-octadecadienoate + AH2 + O2 = (13S)-hydroxy-(9Z,11E)-octadecadienoate + A + H2O. The catalysed reaction is (9Z,12Z)-octadecadienoate + AH2 + O2 = (13R)-hydroxy-(9Z,11E)-octadecadienoate + A + H2O. The protein operates within lipid metabolism; prostaglandin biosynthesis. With respect to regulation, the cyclooxygenase activity is inhibited by nonsteroidal anti-inflammatory drugs (NSAIDs) including ibuprofen, flurbiprofen, ketoprofen, naproxen, flurbiprofen, anirolac, fenclofenac and diclofenac. Its function is as follows. Dual cyclooxygenase and peroxidase that plays an important role in the biosynthesis pathway of prostanoids, a class of C20 oxylipins mainly derived from arachidonate ((5Z,8Z,11Z,14Z)-eicosatetraenoate, AA, C20:4(n-6)), with a particular role in the inflammatory response. The cyclooxygenase activity oxygenates AA to the hydroperoxy endoperoxide prostaglandin G2 (PGG2), and the peroxidase activity reduces PGG2 to the hydroxy endoperoxide prostaglandin H2 (PGH2), the precursor of all 2-series prostaglandins and thromboxanes. This complex transformation is initiated by abstraction of hydrogen at carbon 13 (with S-stereochemistry), followed by insertion of molecular O2 to form the endoperoxide bridge between carbon 9 and 11 that defines prostaglandins. The insertion of a second molecule of O2 (bis-oxygenase activity) yields a hydroperoxy group in PGG2 that is then reduced to PGH2 by two electrons. Involved in the constitutive production of prostanoids in particular in the stomach and platelets. In gastric epithelial cells, it is a key step in the generation of prostaglandins, such as prostaglandin E2 (PGE2), which plays an important role in cytoprotection. In platelets, it is involved in the generation of thromboxane A2 (TXA2), which promotes platelet activation and aggregation, vasoconstriction and proliferation of vascular smooth muscle cells. Can also use linoleate (LA, (9Z,12Z)-octadecadienoate, C18:2(n-6)) as substrate and produce hydroxyoctadecadienoates (HODEs) in a regio- and stereospecific manner, being (9R)-HODE ((9R)-hydroxy-(10E,12Z)-octadecadienoate) and (13S)-HODE ((13S)-hydroxy-(9Z,11E)-octadecadienoate) its major products. The chain is Prostaglandin G/H synthase 1 (PTGS1) from Bos taurus (Bovine).